Consider the following 312-residue polypeptide: Aquaporin Lacbi1:391485 (312 aa).

At 1 to 50 (MDDKFDDDALPNSKTTPEDYGDKLAEYDYTNTFPNTWMRLREPFREYIAE) the chain is on the cytoplasmic side. The helical transmembrane segment at 51–71 (FVGVAVLIIFGVGADCQVVLS) threads the bilayer. Residues 72-89 (ANTGVAPSPKGDYLSLNC) lie on the Extracellular side of the membrane. Residues 90–110 (GWAIGTAMGVWISGGISGGHI) traverse the membrane as a helical segment. Residues 111 to 113 (NPA) carry the NPA 1 motif. The Cytoplasmic segment spans residues 111 to 128 (NPAVTLALMAWRGFPWWK). Residues 129–149 (VPGFIFAQLLGGIVGAGLVYV) form a helical membrane-spanning segment. At 150-183 (NYIHAIDIVEGGRHIRTLDTAGLFATYAADYMTN) the chain is on the extracellular side. The N-linked (GlcNAc...) asparagine glycan is linked to asparagine 183. The chain crosses the membrane as a helical span at residues 184-204 (VSCFFSEFLATAVLIVVIHAM). Topologically, residues 205–213 (NDKRNAPPP) are cytoplasmic. The chain crosses the membrane as a helical span at residues 214 to 234 (AGLAPLVLFFLILGIGASLGM). At 235 to 267 (ETGYAINPARDLGPRMLTAMVGYGRQVFAFRNQ) the chain is on the extracellular side. Residues 241–243 (NPA) carry the NPA 2 motif. Residues 268–288 (YWIWCPVIAPFLGAQVGTIFY) form a helical membrane-spanning segment. Topologically, residues 289 to 312 (DLFFYKGQDNVFGRLGSHIHISPA) are cytoplasmic.

Belongs to the MIP/aquaporin (TC 1.A.8) family.

Its subcellular location is the membrane. It carries out the reaction H2O(in) = H2O(out). It catalyses the reaction glycerol(in) = glycerol(out). The enzyme catalyses NH4(+)(in) = NH4(+)(out). Water channel required to facilitate the transport of water across membranes. In addition to water, also shows strong glycerol and ammonium transport activities. May be involved in fungal nitrogen (ammonium) support of the plant host in symbiosis. Glycerol accumulation has never been observed in ectomycorrhizal (ECM) fungi, therefore, glycerol permeability of Lacbi1:391485 might be a relict of the affiliation of the protein to the group of aquaglyceroporins, and other osmotic active compounds (e.g. trehalose or mannitol) may have taken over glycerol function in ECM fungi. The chain is Aquaporin Lacbi1:391485 from Laccaria bicolor (strain S238N-H82 / ATCC MYA-4686) (Bicoloured deceiver).